Consider the following 291-residue polypeptide: Protease HtpX (291 aa).

Helical transmembrane passes span 4–24 (VLLF…VLSV) and 37–57 (GGLL…SLLM). His-143 contributes to the Zn(2+) binding site. Glu-144 is a catalytic residue. Residue His-147 participates in Zn(2+) binding. 2 helical membrane passes run 158–178 (LIQG…AGIV) and 198–218 (FAIS…IVMW). Residue Glu-224 coordinates Zn(2+).

The protein belongs to the peptidase M48B family. Zn(2+) serves as cofactor.

The protein localises to the cell inner membrane. This Tolumonas auensis (strain DSM 9187 / NBRC 110442 / TA 4) protein is Protease HtpX.